The primary structure comprises 170 residues: Large ribosomal subunit protein bL9 (170 aa).

A disordered region spans residues 149 to 170 (RTEEADAEESAAEEPAVEEAAE). Residues 153-170 (ADAEESAAEEPAVEEAAE) are compositionally biased toward acidic residues.

Belongs to the bacterial ribosomal protein bL9 family.

In terms of biological role, binds to the 23S rRNA. This chain is Large ribosomal subunit protein bL9, found in Oleidesulfovibrio alaskensis (strain ATCC BAA-1058 / DSM 17464 / G20) (Desulfovibrio alaskensis).